Reading from the N-terminus, the 496-residue chain is MASAGSTARRAGSGSWHSERGEGRGARPQPTPHGSMQRANKVSLKATWTDAESKQPRPSEESDQTTIDQTAIRSYYQLFAAAVGNVEWLRFCLNQSLREIPTDYKGFTAIHFAAQRGKLACLQVLVEEYKFPVNLLTNNSQTPLHLVIHKDNTTVALPCIYYLLEKGAALNAQTCNGCTPLHLAVREGLLDCVKVLVQSGANVHAQDAMGYKPIDFCKIWNHRACARFLKDAMWKKDKKDFACEMRKMKTLKSQLALMEYNYLIEYQKEHKILREAAIRKWLHGKLHPGHSLVSNTKQARATALSKTPEQRGSQCSSSFHPSVEARLQCIPQPTEMPKPIYRKSTIKRPTMWNVSNNPARPPTTKISHSQGIRLGVHPDPSPEHDFSSFLEVRPDRHGGAWLHTVDGHWVAPVPRLPFEVLLRMLYPHVRPYRMKVPQGFYPISMREVPRKRHLGDDTFWTDTLAMNLRDTFDEAFLAAVRSHQGLPALPSPQINP.

The span at M1–S15 shows a compositional bias: low complexity. The tract at residues M1–T66 is disordered. Positions A51–E60 are enriched in basic and acidic residues. 3 ANK repeats span residues K105–L135, N139–A172, and N176–A205. The tract at residues L292–H320 is disordered.

In terms of assembly, interacts with PSRC1; recruited by PSRC1 to the spindle during mitosis. Post-translationally, phosphorylated during mitosis.

Its subcellular location is the cytoplasm. It localises to the cytoskeleton. It is found in the spindle. The protein localises to the spindle pole. Required for normal progression through mitosis. Involved in chromosome alignment and cytokinesis via regulation of microtubules polymerization. This Macaca fascicularis (Crab-eating macaque) protein is Ankyrin repeat domain-containing protein 53 (ANKRD53).